The chain runs to 327 residues: Lipoyl synthase (327 aa).

7 residues coordinate [4Fe-4S] cluster: Cys-66, Cys-71, Cys-77, Cys-92, Cys-96, Cys-99, and Ser-306. Positions 78 to 295 constitute a Radical SAM core domain; that stretch reads FSKGTATFMI…EKEAYELGFS (218 aa).

Belongs to the radical SAM superfamily. Lipoyl synthase family. It depends on [4Fe-4S] cluster as a cofactor.

The protein resides in the cytoplasm. It carries out the reaction [[Fe-S] cluster scaffold protein carrying a second [4Fe-4S](2+) cluster] + N(6)-octanoyl-L-lysyl-[protein] + 2 oxidized [2Fe-2S]-[ferredoxin] + 2 S-adenosyl-L-methionine + 4 H(+) = [[Fe-S] cluster scaffold protein] + N(6)-[(R)-dihydrolipoyl]-L-lysyl-[protein] + 4 Fe(3+) + 2 hydrogen sulfide + 2 5'-deoxyadenosine + 2 L-methionine + 2 reduced [2Fe-2S]-[ferredoxin]. The protein operates within protein modification; protein lipoylation via endogenous pathway; protein N(6)-(lipoyl)lysine from octanoyl-[acyl-carrier-protein]: step 2/2. Its function is as follows. Catalyzes the radical-mediated insertion of two sulfur atoms into the C-6 and C-8 positions of the octanoyl moiety bound to the lipoyl domains of lipoate-dependent enzymes, thereby converting the octanoylated domains into lipoylated derivatives. This chain is Lipoyl synthase, found in Neisseria meningitidis serogroup A / serotype 4A (strain DSM 15465 / Z2491).